Reading from the N-terminus, the 320-residue chain is Beta-carotene 4-ketolase 3 (320 aa).

The enzyme catalyses echinenone + 2 AH2 + 2 O2 = canthaxanthin + 2 A + 3 H2O. The catalysed reaction is all-trans-beta-carotene + 2 AH2 + 2 O2 = echinenone + 2 A + 3 H2O. It participates in carotenoid biosynthesis. In terms of biological role, involved in the biosynthesis of ketocarotenoids which are powerful anti-oxidative molecules. Catalyzes the conversion of beta-carotene to canthaxanthin via echinenone. In Haematococcus lacustris (Green alga), this protein is Beta-carotene 4-ketolase 3.